Here is a 392-residue protein sequence, read N- to C-terminus: O-phospho-L-seryl-tRNA:Cys-tRNA synthase 1 (392 aa).

Residues 85–86 (AR), Asn190, and 213–215 (SGH) contribute to the pyridoxal 5'-phosphate site. At Lys216 the chain carries N6-(pyridoxal phosphate)lysine.

It belongs to the SepCysS family. Homodimer. Interacts with SepRS. The cofactor is pyridoxal 5'-phosphate.

It catalyses the reaction O-phospho-L-seryl-tRNA(Cys) + hydrogen sulfide + H(+) = L-cysteinyl-tRNA(Cys) + phosphate. Converts O-phospho-L-seryl-tRNA(Cys) (Sep-tRNA(Cys)) to L-cysteinyl-tRNA(Cys) (Cys-tRNA(Cys)). This Methanocorpusculum labreanum (strain ATCC 43576 / DSM 4855 / Z) protein is O-phospho-L-seryl-tRNA:Cys-tRNA synthase 1.